The primary structure comprises 71 residues: MSYFRRRLSPIKPGEPIDYKDVDLLRKFVTERGKILPRRITGLTSQQQRELTLAIKRSRIVALLPFINAEG.

Belongs to the bacterial ribosomal protein bS18 family. In terms of assembly, part of the 30S ribosomal subunit. Forms a tight heterodimer with protein bS6.

Functionally, binds as a heterodimer with protein bS6 to the central domain of the 16S rRNA, where it helps stabilize the platform of the 30S subunit. In Nostoc punctiforme (strain ATCC 29133 / PCC 73102), this protein is Small ribosomal subunit protein bS18.